A 385-amino-acid polypeptide reads, in one-letter code: Transcription termination factor 2, mitochondrial (385 aa).

A mitochondrion-targeting transit peptide spans 1–35; it reads MPWRLPTGHQLCRLCLLRKPRPALKIKPSSACVTY.

This sequence belongs to the mTERF family. In terms of assembly, monomer.

The protein resides in the mitochondrion matrix. Its subcellular location is the mitochondrion nucleoid. Binds mitochondrial DNA and plays a role in the regulation of transcription of mitochondrial mRNA and rRNA species. The sequence is that of Transcription termination factor 2, mitochondrial (Mterf2) from Mus musculus (Mouse).